A 702-amino-acid polypeptide reads, in one-letter code: MIHTLETTVAGRKMKVDFGKTGMLSNAAIFMSYGDTVVMINANASKEPREGIDFFPLSVEYEERLYSVGKIPGGFIKREGKPSDKSILHARSIDRPLRPLFPKGYRNDVQIVNTVLSVEQDNLPEILAINGSSLALCLSSIPFTTPVAAVSVGLVDGEFIINPTVAQRENTILDLTVCATKERVMMVEAGGQEIDEETMYSAIMFGFEECKNIVAFQEEAVAKFGKTKNEPVLYKADEEVEKEVKSFAFDMIKEAMYIMDKDERNAQLDKVKEKISEEFSEKYEDKGADISEVIYKTQKEIVRNMLLNEDRRPDGRAFNEVRPISCEVGILPRTHGTGLFTRGLTQVMTVATLGALGDVQILDGIAEEESKRYMHHYNFPSYSVGEVRPLRGPGRREIGHGALAERALEPLIPSEEEFPYTIRLVSEVLSSNGSTSQASVCGSTLALLDAGVPIKRPAAGIAMGLITSEDLEKEKVITDIQGIEDFFGDMDFKVAGTEKGITSIQFDTKIAGLSNSCVKDALEGAKKARLHILGKIKECIPEPRKELSKYAPRTEIICIDPEKIRDVIGAGGKVINKIIADTNVKIEIKEDGKIFVTSNNEPEGVKKAISIIEGLTKEVVQGEIYLGKVTKTTNFGAFVEILPGKEGLVHISKLDFARVEKVEDVVSVGDEILVKVTDIDNQGRINLSRKDAIAKKEEEKDK.

Aspartate 485 and aspartate 491 together coordinate Mg(2+). The region spanning 552–612 is the KH domain; it reads PRTEIICIDP…EGVKKAISII (61 aa). The 69-residue stretch at 622–690 folds into the S1 motif domain; that stretch reads GEIYLGKVTK…NQGRINLSRK (69 aa).

The protein belongs to the polyribonucleotide nucleotidyltransferase family. Requires Mg(2+) as cofactor.

The protein localises to the cytoplasm. The catalysed reaction is RNA(n+1) + phosphate = RNA(n) + a ribonucleoside 5'-diphosphate. Its function is as follows. Involved in mRNA degradation. Catalyzes the phosphorolysis of single-stranded polyribonucleotides processively in the 3'- to 5'-direction. The polypeptide is Polyribonucleotide nucleotidyltransferase (Clostridium botulinum (strain 657 / Type Ba4)).